We begin with the raw amino-acid sequence, 540 residues long: Peptide chain release factor 3 (540 aa).

One can recognise a tr-type G domain in the interval 14–283; that stretch reads ELRRNFAIIS…YFLNYALKPG (270 aa). Residues 23-30, 91-95, and 145-148 contribute to the GTP site; these read SHPDAGKT, DTPGH, and NKLD.

It belongs to the TRAFAC class translation factor GTPase superfamily. Classic translation factor GTPase family. PrfC subfamily.

The protein localises to the cytoplasm. In terms of biological role, increases the formation of ribosomal termination complexes and stimulates activities of RF-1 and RF-2. It binds guanine nucleotides and has strong preference for UGA stop codons. It may interact directly with the ribosome. The stimulation of RF-1 and RF-2 is significantly reduced by GTP and GDP, but not by GMP. The chain is Peptide chain release factor 3 from Trichormus variabilis (strain ATCC 29413 / PCC 7937) (Anabaena variabilis).